Here is a 502-residue protein sequence, read N- to C-terminus: MFS-type transporeter aprT (502 aa).

Positions 1–38 (MASPELASHHSDPSDGEGAPFLPGVDDESPESLNSDIP) are disordered. 11 helical membrane-spanning segments follow: residues 45–65 (HGLIIKLFVIYLAIGMGGPMI), 114–136 (IGYREFFNAFLTSTFALPYGLLA), 150–170 (VGFVFNSVLSFAPIWLPNIFP), 175–195 (WFGAVGWVLGGGPVLLFALFW), 214–234 (FGIATVSAGFLANVTSSFVMK), 239–259 (VPLMTGCGLLFAGLLVANLLP), 302–322 (VAVILPAFFVTQLAGGSAFLV), 336–356 (ATLLVALQHAFTIPVLFFILP), 380–400 (VMLLALGLFGIGLSSSINTLI), 403–423 (LLLHAGGAGFVLIARGLITGL), and 464–484 (LWIGLPWLIVSFLLALIALVL). Asn495 carries N-linked (GlcNAc...) asparagine glycosylation.

Belongs to the major facilitator superfamily.

Its subcellular location is the cell membrane. Its function is as follows. MFS-rype transporer; part of the gene cluster that mediates the biosynthesis of the asperipin-2a, a bicyclic peptide that possesses two macrocyclic ether rings consisting of 14- and 17-membered paracyclophans. AprT is likely to be involved in the cellular export of asperipin-2a. This is MFS-type transporeter aprT from Aspergillus flavus (strain ATCC 200026 / FGSC A1120 / IAM 13836 / NRRL 3357 / JCM 12722 / SRRC 167).